Reading from the N-terminus, the 127-residue chain is Large ribosomal subunit protein bL12 (127 aa).

It belongs to the bacterial ribosomal protein bL12 family. As to quaternary structure, homodimer. Part of the ribosomal stalk of the 50S ribosomal subunit. Forms a multimeric L10(L12)X complex, where L10 forms an elongated spine to which 2 to 4 L12 dimers bind in a sequential fashion. Binds GTP-bound translation factors.

Its function is as follows. Forms part of the ribosomal stalk which helps the ribosome interact with GTP-bound translation factors. Is thus essential for accurate translation. The sequence is that of Large ribosomal subunit protein bL12 from Acidiphilium cryptum (strain JF-5).